The sequence spans 125 residues: Small ribosomal subunit protein uS13 (125 aa).

Positions 91–125 (HRRSLPVRGQNTQTNARTRKGKRKTVAGKKKAARK) are disordered. Positions 107-125 (RTRKGKRKTVAGKKKAARK) are enriched in basic residues.

It belongs to the universal ribosomal protein uS13 family. In terms of assembly, part of the 30S ribosomal subunit. Forms a loose heterodimer with protein S19. Forms two bridges to the 50S subunit in the 70S ribosome.

Located at the top of the head of the 30S subunit, it contacts several helices of the 16S rRNA. In the 70S ribosome it contacts the 23S rRNA (bridge B1a) and protein L5 of the 50S subunit (bridge B1b), connecting the 2 subunits; these bridges are implicated in subunit movement. Contacts the tRNAs in the A and P-sites. In Chlorobium phaeovibrioides (strain DSM 265 / 1930) (Prosthecochloris vibrioformis (strain DSM 265)), this protein is Small ribosomal subunit protein uS13.